A 23-amino-acid chain; its full sequence is Basic phospholipase A2 CB1 (23 aa).

In terms of assembly, heterodimer of an acidic subunit and a basic chain. The acidic subunit is non-toxic, without enzymatic activity and comprises 3 peptides that are cross-linked by 7 disulfide bridges. The basic subunit is toxic, has phospholipase A2 activity and is composed of a single chain. Ca(2+) serves as cofactor. Contains 7 disulfide bonds. As to expression, expressed by the venom gland.

The protein localises to the secreted. The catalysed reaction is a 1,2-diacyl-sn-glycero-3-phosphocholine + H2O = a 1-acyl-sn-glycero-3-phosphocholine + a fatty acid + H(+). Functionally, snake venom phospholipase A2 (PLA2) that shows presynaptic neurotoxicity. PLA2 catalyzes the calcium-dependent hydrolysis of the 2-acyl groups in 3-sn-phosphoglycerides. The polypeptide is Basic phospholipase A2 CB1 (Crotalus basiliscus (Mexican west-coast rattlesnake)).